A 456-amino-acid polypeptide reads, in one-letter code: Transcription factor tau subunit sfc1 (456 aa).

Disordered stretches follow at residues 394–416 and 437–456; these read DRYSNFDEQDNTDLNDTVRGLNT and HEGFEDLEEIDDDYDDIFGD. Residues 407 to 416 are compositionally biased toward polar residues; that stretch reads LNDTVRGLNT. Residues 441–456 show a composition bias toward acidic residues; that stretch reads EDLEEIDDDYDDIFGD.

Component of the TFIIIC complex including sfc1, sfc3, sfc4, sfc6 and sfc7. The subunits are organized in two globular domains, tauA and tauB, connected by a proteolysis-sensitive and flexible linker. Interacts with sfc3, sfc4 and sfc6. In terms of processing, phosphorylated.

The protein resides in the nucleus. TFIIIC mediates tRNA and 5S RNA gene activation by binding to intragenic promoter elements. Upstream of the transcription start site, TFIIIC assembles the initiation complex TFIIIB-TFIIIC-tDNA, which is sufficient for RNA polymerase III recruitment and function. Part of the tauA domain of TFIIIC that binds boxA DNA promoter sites of tRNA and similar genes. Participates in the interconnection of tauA with tauB via its contacts with sfc3 and sfc6. Serves as a scaffold critical for tauA-DNA spatial configuration and tauB-DNA stability. Localizes to chromatin insulator sequence without recruiting RNA polymerase III and plays a role in nuclear organization. The polypeptide is Transcription factor tau subunit sfc1 (sfc1) (Schizosaccharomyces pombe (strain 972 / ATCC 24843) (Fission yeast)).